A 1409-amino-acid chain; its full sequence is MNDKEKEICPRLIDFLVVVGKRNRTRGASQSSPDATTDTTVTYPEILRRYPTDDHKDFILPTDVTVFCQPEGCTTTSARLRKNARNDPQFFVFMLTEKDSAKVRYGICLNFYQSFDRRSTPKDEIKKVPDDAHHKKRDSHVSLTSLCFISHHPFVSIFHQVLLLLKRIIDSSNHRAAQRTGLKDVVWAILTGHYNEPIVPEVMKEIKEIETWILMLLSSPVPVPGKTKVQIEVMPMDLSQVFEFALPDHTRFTLIDFPLHIPFEILGIDMALRVLTAAMLEFKIVIQSRNYNAVSMCILSIVALLYPLEYMFPVIPLLPAYMPSAEQLLLAPTPFLIGVPSSFFHHRKIRELPSDVILVDLDTNCLQVPDDLYIPDLPEPDATHLKERLKNAINKMTTMTVDNETSVTDADFGIDIDSVDVACRVAMVQFFNSANVFGNFSEHTRTLRLYPRPVVSLQTDSFLRSRPQCTQLITDLCRTQAVEYFAECCLCPKNETFVRVQAGIESAEQVGDKPKWFSESLMPVHFMVYPNNSTLDSAIRVYNAEIDNDDYEDDSATSTENSNSIDDLVFDENQVTDAGGEVTKPLAEVNYIYKEPMTLELPQSESVVSIDSSLSSGRSSPDSSLSTSAVDSEADFARLADNLALKSNSQGAFSFDHGSDSEYESTPVSQRRKTIHNPGSDASDTPTSRGSIKSGLRMKGLTTLTDSGEKVLGPSLMNAINGYAEKSQSVFSQVINKTAPKAQALKERTMKPLANRIEQSQHIVRSKTQPNPTSQQTANQQSKNQQTVKEFCDQALVGQSVGMFSAPKLKRLMEDESLRELVCSKLNLGLEVKLSEDEYVKEVQLTKGQFKAYVKILKACLEGIEVSFNTPGCCGFASVFHVLEIAHTHYWAMGGGEVITPSSSAPSTMTTPSEHSNDILKESRPKLPASTIDLRTPTKPLGQNVTPTSTNNHEIAQSTRSPALPPPVPPREAPPIPKRNPPPLGAPPKVPEGARAPPPLPPRPKVKTTAVDETPQNLVPNNQPAQPSSPSFLADADEQTKPLLKPAPPTTLPVGKQEPCKVLPTPNEPVRHYIYQELILAVQHQIWQNLQFWENAFVDLVAQEREIVGMDQEPSEMIDRYSALNDSEKKRLELEEDRLLSTLLHNMTAYMIMCGTGQKALQQKVRRLLGKAHIGLVCSKEINKLLDELPSTQGNFIPLKPLGSRLVQKQSFTVCPGQSSDGQMMFMEVCDDAVVLRSITGAATERWWYERLVNITYSPKTKILCLWRRHDDKVHMHKFHTKKCRELYQCMKAAMERAAARGKVNVEGRALGGEFPVHDTETNQGGLLQVRCDGVAVIFAHNQIFIGLSNIKKCNTFGGNVFLLEEFDRKKGEIIQRRYFSQMADQICYAVLCVFSLAAAGHKKEEHSK.

Residues 26–230 (RGASQSSPDA…VPVPGKTKVQ (205 aa)) form the uDENN domain. The cDENN domain maps to 251–390 (RFTLIDFPLH…DATHLKERLK (140 aa)). Residues 392 to 496 (AINKMTTMTV…ECCLCPKNET (105 aa)) enclose the dDENN domain. Disordered regions lie at residues 654-701 (SFDH…MKGL), 761-784 (QHIV…QSKN), 902-1008 (SSSA…KVKT), and 1015-1034 (PQNL…SFLA). 2 stretches are compositionally biased toward polar residues: residues 680–691 (SDASDTPTSRGS) and 761–772 (QHIVRSKTQPNP). Composition is skewed to low complexity over residues 773–784 (TSQQTANQQSKN) and 902–913 (SSSAPSTMTTPS). The span at 915–925 (HSNDILKESRP) shows a compositional bias: basic and acidic residues. Residues 941–961 (LGQNVTPTSTNNHEIAQSTRS) show a composition bias toward polar residues. The segment covering 963 to 1003 (ALPPPVPPREAPPIPKRNPPPLGAPPKVPEGARAPPPLPPR) has biased composition (pro residues). The span at 1020 to 1031 (PNNQPAQPSSPS) shows a compositional bias: low complexity. One can recognise a Death domain in the interval 1109-1184 (GMDQEPSEMI…GLVCSKEINK (76 aa)).

This sequence belongs to the MADD family. In terms of assembly, interacts with cab-1. Expressed in nearly all neurons.

The protein localises to the cell membrane. The protein resides in the cytoplasm. Functionally, guanyl-nucleotide exchange factor that regulates small GTPases. Converts GDP-bound inactive form of rab-3 and cab-1 to the GTP-bound active forms. Regulator of presynaptic activity that interacts with rab-3 to regulate synaptic vesicle release. Is also a regulator of the cab-1 synaptic transmission pathway. Probably by converting rab-3 to its GTP-bound active form, plays a role in the recruitment of endophilin unc-57 to synaptic vesicles. Probably by activating rab-3 and thus regulating the trafficking of dense-core vesicles, plays a role in AVG neuron-mediated formation of the right axon tract of the ventral nerve cord. Regulates anterior body muscle contractions (aBOC) and the expulsion steps during the defecation motor program (DMP). Probably by regulating DMP, required for fatty acid uptake by intestinal cells. In Caenorhabditis elegans, this protein is MAP kinase-activating death domain protein (aex-3).